The chain runs to 252 residues: MAFFRRLILMIQFLTRIPIKYESDITTEDFGKALALVPIVGLIIGGIMGVTYMLLVKVFFYKISAVLVLIEYIFLTGGIHLDGLGDTFDGVFSNRPKERILEIMRDSRVGTNAVLAVISVIILNYVILTEIDPAYMVKVIILFPVAGRLGSIVSASLSTYARRGEGMGKSFIDYCTLKELAIGIILYAVIFLSVGLSRGYIIMIFPILTAVILIKYFTRKIGGATGDILGAVCELNQTFYLMTVYAVLYFRG.

A run of 7 helical transmembrane segments spans residues L36 to V56, F59 to I79, V109 to T129, P133 to V153, S170 to L192, G199 to T218, and I228 to L248.

It belongs to the CobS family. It depends on Mg(2+) as a cofactor.

The protein localises to the cell membrane. The catalysed reaction is alpha-ribazole + adenosylcob(III)inamide-GDP = adenosylcob(III)alamin + GMP + H(+). It catalyses the reaction alpha-ribazole 5'-phosphate + adenosylcob(III)inamide-GDP = adenosylcob(III)alamin 5'-phosphate + GMP + H(+). It functions in the pathway cofactor biosynthesis; adenosylcobalamin biosynthesis; adenosylcobalamin from cob(II)yrinate a,c-diamide: step 7/7. Joins adenosylcobinamide-GDP and alpha-ribazole to generate adenosylcobalamin (Ado-cobalamin). Also synthesizes adenosylcobalamin 5'-phosphate from adenosylcobinamide-GDP and alpha-ribazole 5'-phosphate. The chain is Adenosylcobinamide-GDP ribazoletransferase from Clostridium acetobutylicum (strain ATCC 824 / DSM 792 / JCM 1419 / IAM 19013 / LMG 5710 / NBRC 13948 / NRRL B-527 / VKM B-1787 / 2291 / W).